Reading from the N-terminus, the 79-residue chain is UPF0154 protein Lm4b_01315 (79 aa).

A helical transmembrane segment spans residues 2-22 (WIYILVGIICLLAGLAGGFFI). Residues 57-66 (KINQMMSAMN) are compositionally biased toward polar residues. Residues 57–79 (KINQMMSAMNKQQEKEKPKKTKK) form a disordered region.

Belongs to the UPF0154 family.

The protein resides in the cell membrane. The protein is UPF0154 protein Lm4b_01315 of Listeria monocytogenes serotype 4b (strain CLIP80459).